The chain runs to 323 residues: Sphingolipid delta(4)-desaturase/C4-monooxygenase DES2 (323 aa).

A lipid anchor (N-myristoyl glycine) is attached at Gly2. The next 2 helical transmembrane spans lie at 45–65 (WAVLVLVLVQMLACWLVRGLA) and 68–88 (WLLFWAYAFGGCVNHSLTLAI). The short motif at 89–93 (HDISH) is the Histidine box-1 element. Residues 95–99 (AAFGT) are required for C4-hydroxylase activity. The Histidine box-2 signature appears at 128 to 132 (HVDHH). Residues 210-231 (VYLLASSFLGLGLHPISGHFVA) form a helical membrane-spanning segment. The Histidine box-3 motif lies at 259-263 (HVEHH).

It belongs to the fatty acid desaturase type 1 family. DEGS subfamily. In terms of tissue distribution, highly expressed in skin, intestine and kidney.

It localises to the endoplasmic reticulum membrane. The catalysed reaction is a dihydroceramide + 2 Fe(II)-[cytochrome b5] + O2 + 2 H(+) = a phytoceramide + 2 Fe(III)-[cytochrome b5] + H2O. The enzyme catalyses an N-acylsphinganine + 2 Fe(II)-[cytochrome b5] + O2 + 2 H(+) = an N-acylsphing-4-enine + 2 Fe(III)-[cytochrome b5] + 2 H2O. It catalyses the reaction N-octanoylsphinganine + 2 Fe(II)-[cytochrome b5] + O2 + 2 H(+) = N-octanoyl-4-hydroxysphinganine + 2 Fe(III)-[cytochrome b5] + H2O. It carries out the reaction an N-acylsphinganine + 2 Fe(II)-[cytochrome b5] + O2 + 2 H(+) = an N-acyl-(4R)-4-hydroxysphinganine + 2 Fe(III)-[cytochrome b5] + H2O. It participates in membrane lipid metabolism; sphingolipid biosynthesis. Its function is as follows. Bifunctional enzyme which acts both as a sphingolipid delta(4)-desaturase and a sphingolipid C4-monooxygenase. The chain is Sphingolipid delta(4)-desaturase/C4-monooxygenase DES2 from Homo sapiens (Human).